The following is a 174-amino-acid chain: Nucleoside-triphosphatase THEP1 (174 aa).

ATP is bound by residues 7–14 and 98–105; these read GRPGSGKS and CIIIDEIG.

It belongs to the THEP1 NTPase family.

It catalyses the reaction a ribonucleoside 5'-triphosphate + H2O = a ribonucleoside 5'-diphosphate + phosphate + H(+). Its function is as follows. Has nucleotide phosphatase activity towards ATP, GTP, CTP, TTP and UTP. May hydrolyze nucleoside diphosphates with lower efficiency. The chain is Nucleoside-triphosphatase THEP1 from Methanothermobacter thermautotrophicus (strain ATCC 29096 / DSM 1053 / JCM 10044 / NBRC 100330 / Delta H) (Methanobacterium thermoautotrophicum).